We begin with the raw amino-acid sequence, 80 residues long: Putative membrane protein insertion efficiency factor (80 aa).

This sequence belongs to the UPF0161 family.

The protein resides in the cell inner membrane. Its function is as follows. Could be involved in insertion of integral membrane proteins into the membrane. The polypeptide is Putative membrane protein insertion efficiency factor (Kosmotoga olearia (strain ATCC BAA-1733 / DSM 21960 / TBF 19.5.1)).